Consider the following 365-residue polypeptide: Popy Class I histocompatibility antigen, A-1 alpha chain (365 aa).

An N-terminal signal peptide occupies residues 1-24 (MAIMAPRTLLLLLSGALALTQTWA). Residues 25–114 (GSHSMRYFST…LRGYYNQSDG (90 aa)) form an alpha-1 region. Topologically, residues 25–308 (GSHSMRYFST…ELSSQPTIPI (284 aa)) are extracellular. Asparagine 110 is a glycosylation site (N-linked (GlcNAc...) asparagine). The alpha-2 stretch occupies residues 115-206 (GSHTIQRMFG…ENGKETLQRT (92 aa)). Cystine bridges form between cysteine 125–cysteine 188 and cysteine 227–cysteine 283. The interval 207 to 298 (DAPKTHMTHH…GLPEPLTLRW (92 aa)) is alpha-3. The 89-residue stretch at 209-297 (PKTHMTHHPV…EGLPEPLTLR (89 aa)) folds into the Ig-like C1-type domain. The segment at 299 to 308 (ELSSQPTIPI) is connecting peptide. The chain crosses the membrane as a helical span at residues 309–332 (VGIIAGLVLLGAVITGAVVAAVMW). At 333–365 (RRRNSDRKGGSYSQAASNDSAQGSDVSLTACKV) the chain is on the cytoplasmic side. The tract at residues 340 to 365 (KGGSYSQAASNDSAQGSDVSLTACKV) is disordered. Serine 343 bears the Phosphoserine mark. Residues 343–359 (SYSQAASNDSAQGSDVS) show a composition bias toward polar residues. A Phosphotyrosine modification is found at tyrosine 344. Residues serine 345, serine 349, serine 352, serine 356, and serine 359 each carry the phosphoserine modification.

Belongs to the MHC class I family. Heterodimer of an alpha chain and a beta chain (beta-2-microglobulin).

It is found in the membrane. In terms of biological role, involved in the presentation of foreign antigens to the immune system. The polypeptide is Popy Class I histocompatibility antigen, A-1 alpha chain (Pongo pygmaeus (Bornean orangutan)).